We begin with the raw amino-acid sequence, 123 residues long: Cyclic ether formation enzyme xenC (123 aa).

The first 24 residues, 1-24 (MSSLLLSDVLSYGIFGFSALCVQA), serve as a signal peptide directing secretion. 2 consecutive transmembrane segments (helical) span residues 58–78 (SALRYVFVSINIAVCVLLWSP) and 102–122 (LGESPIPHLLLVSTVGAAILV).

Belongs to the cyclic ether formation enzyme xenC family.

The protein resides in the membrane. Its pathway is mycotoxin biosynthesis. Functionally, cyclic ether formation enzyme; part of the gene cluster that mediates the biosynthesis of xenoacremones such as xenoacremone A, a compound that shows inhibitory activity toward the PI3K/AKT signaling pathway and which has the ability to induce apoptosis of A549 lung cancer cells. Within the pathway, cooperation of the hybrid PKS-NRPS xenE and the trans-acting enoyl reductase xenG is responsible for the formation of the reduced tyrosine-nonaketide derivative. The alpha/beta hydrolase xenA then accelerates intramolecular nucleophilic attack to give a pyrrolidone derivative. Subsequently, three enzymes, xenF, xenD, and xenC, coordinately participate in the conversion to xenoacremone B. XenF catalyzes sigmatropic rearrangement to form an A-ring, which leads to an unusual intermediate with a hexane ring, which is required for the formation of the tricarbocyclic product. Epoxidation catalyzed by xenD and the formation of the paracyclophane ether catalyzed by xenC initiate a spontaneous intramolecular Diels-Alder (IMDA) reaction to yield xenoacremone B. Spontaneous hydration of xenoacremone B leads to the formation of xenoacremone A, which undergoes subsequent methylation to afford xenoacremone C. The sequence is that of Cyclic ether formation enzyme xenC from Xenoacremonium sinensis (Endophyte fungus).